A 78-amino-acid polypeptide reads, in one-letter code: Acyl carrier protein (78 aa).

Positions 2–77 (SDIEQRVKQA…SAIDYVTKKL (76 aa)) constitute a Carrier domain. The residue at position 37 (S37) is an O-(pantetheine 4'-phosphoryl)serine.

It belongs to the acyl carrier protein (ACP) family. Post-translationally, 4'-phosphopantetheine is transferred from CoA to a specific serine of apo-ACP by AcpS. This modification is essential for activity because fatty acids are bound in thioester linkage to the sulfhydryl of the prosthetic group.

It localises to the cytoplasm. The protein operates within lipid metabolism; fatty acid biosynthesis. Carrier of the growing fatty acid chain in fatty acid biosynthesis. The polypeptide is Acyl carrier protein (Acinetobacter baylyi (strain ATCC 33305 / BD413 / ADP1)).